We begin with the raw amino-acid sequence, 238 residues long: Thiamine import ATP-binding protein ThiQ (238 aa).

The region spanning 2–230 (LALDKVRYEY…HPHPELAQFV (229 aa)) is the ABC transporter domain. 32–39 (GPSGAGKS) contributes to the ATP binding site.

The protein belongs to the ABC transporter superfamily. Thiamine importer (TC 3.A.1.19.1) family. As to quaternary structure, the complex is composed of two ATP-binding proteins (ThiQ), two transmembrane proteins (ThiP) and a solute-binding protein (ThiB).

It localises to the cell inner membrane. It carries out the reaction thiamine(out) + ATP + H2O = thiamine(in) + ADP + phosphate + H(+). Its function is as follows. Part of the ABC transporter complex ThiBPQ involved in thiamine import. Responsible for energy coupling to the transport system. In Vibrio cholerae serotype O1 (strain ATCC 39315 / El Tor Inaba N16961), this protein is Thiamine import ATP-binding protein ThiQ.